Here is a 346-residue protein sequence, read N- to C-terminus: Signal recognition particle receptor FtsY (346 aa).

Residues glycine 143–threonine 150, aspartate 225–arginine 229, and threonine 289–aspartate 292 contribute to the GTP site.

Belongs to the GTP-binding SRP family. FtsY subfamily. Part of the signal recognition particle protein translocation system, which is composed of SRP and FtsY.

It localises to the cell membrane. The protein localises to the cytoplasm. The catalysed reaction is GTP + H2O = GDP + phosphate + H(+). Functionally, involved in targeting and insertion of nascent membrane proteins into the cytoplasmic membrane. Acts as a receptor for the complex formed by the signal recognition particle (SRP) and the ribosome-nascent chain (RNC). This Mycoplasma genitalium (strain ATCC 33530 / DSM 19775 / NCTC 10195 / G37) (Mycoplasmoides genitalium) protein is Signal recognition particle receptor FtsY.